The primary structure comprises 189 residues: MKKYSKKDRQMKLQVAIEENPFITDEQLAEKFGVSVQTIRLDRVALSIPELRERIKHVASVNYADAVKSLPIDEVIGEIIDIQLSKSAISIFDVRSEHVFKRNKIARGHHLFAQANSLATAVIPNEIALTTQATVRFVRSVNEGERIIAKAKVRPATDNRAITIVDVKSYVGDEIVLKGKFEMYHATQK.

The protein belongs to the FapR family.

Its function is as follows. Transcriptional factor involved in regulation of membrane lipid biosynthesis by repressing genes involved in fatty acid and phospholipid metabolism. This Listeria monocytogenes serotype 4b (strain CLIP80459) protein is Transcription factor FapR.